Reading from the N-terminus, the 201-residue chain is uncharacterized protein (201 aa).

Disordered regions lie at residues proline 46 to glutamate 80 and serine 143 to alanine 201. 2 stretches are compositionally biased toward polar residues: residues glycine 64–tyrosine 78 and serine 143–alanine 167.

This is an uncharacterized protein from Legionella pneumophila.